A 56-amino-acid chain; its full sequence is Small ribosomal subunit protein bS21 (56 aa).

It belongs to the bacterial ribosomal protein bS21 family.

The sequence is that of Small ribosomal subunit protein bS21 from Synechococcus sp. (strain WH7803).